Reading from the N-terminus, the 217-residue chain is Adenylate kinase (217 aa).

Position 10–15 (10–15) interacts with ATP; it reads GAGKGT. The tract at residues 30-59 is NMP; that stretch reads STGDIFRKNVADDTPLGRLAKQYMDAGDLV. Residues T31, R36, 57–59, 85–88, and Q92 each bind AMP; these read DLV and GFPR. Residues 126–163 form an LID region; that stretch reads GRRTCADCAHVWHVTYDPPTVDGVCDLCGGKLFQREDD. R127 is a binding site for ATP. Positions 130, 133, 150, and 153 each coordinate Zn(2+). Residues R160 and R171 each contribute to the AMP site. Position 199 (G199) interacts with ATP.

This sequence belongs to the adenylate kinase family. In terms of assembly, monomer.

The protein localises to the cytoplasm. It carries out the reaction AMP + ATP = 2 ADP. The protein operates within purine metabolism; AMP biosynthesis via salvage pathway; AMP from ADP: step 1/1. Catalyzes the reversible transfer of the terminal phosphate group between ATP and AMP. Plays an important role in cellular energy homeostasis and in adenine nucleotide metabolism. This chain is Adenylate kinase, found in Acidothermus cellulolyticus (strain ATCC 43068 / DSM 8971 / 11B).